A 441-amino-acid polypeptide reads, in one-letter code: Methylenetetrahydrofolate--tRNA-(uracil-5-)-methyltransferase TrmFO (441 aa).

7-12 (GAGLSG) contacts FAD.

Belongs to the MnmG family. TrmFO subfamily. Requires FAD as cofactor.

The protein localises to the cytoplasm. The enzyme catalyses uridine(54) in tRNA + (6R)-5,10-methylene-5,6,7,8-tetrahydrofolate + NADH + H(+) = 5-methyluridine(54) in tRNA + (6S)-5,6,7,8-tetrahydrofolate + NAD(+). The catalysed reaction is uridine(54) in tRNA + (6R)-5,10-methylene-5,6,7,8-tetrahydrofolate + NADPH + H(+) = 5-methyluridine(54) in tRNA + (6S)-5,6,7,8-tetrahydrofolate + NADP(+). Catalyzes the folate-dependent formation of 5-methyl-uridine at position 54 (M-5-U54) in all tRNAs. This chain is Methylenetetrahydrofolate--tRNA-(uracil-5-)-methyltransferase TrmFO, found in Pseudothermotoga lettingae (strain ATCC BAA-301 / DSM 14385 / NBRC 107922 / TMO) (Thermotoga lettingae).